We begin with the raw amino-acid sequence, 568 residues long: Phosphoprotein (568 aa).

Residues 1 to 23 (MDQDALISKEDSEVEREASGGRE) are disordered. A compositionally biased stretch (basic and acidic residues) spans 7–20 (ISKEDSEVEREASG). Residues 33-41 (DAVLSSEPT) are N0 binding. A disordered region spans residues 54–317 (INTLQRPGST…SPETDATKKG (264 aa)). 3 stretches are compositionally biased toward basic and acidic residues: residues 99–110 (AEAHARNVDKQN), 150–168 (GAED…RGED), and 175–193 (EEIR…RADN). Residues S249, S257, and S260 each carry the phosphoserine; by host modification. The multimerization stretch occupies residues 344-411 (FESSRDASYV…SFRDIYKRFS (68 aa)). A coiled-coil region spans residues 364–429 (YAEMAFNVCG…LLMSNLSTLH (66 aa)). Residues 412–445 (EYQKEQNSLLMSNLSTLHIITDRGGKTDNPDSPT) are l protein binding. A disordered region spans residues 433 to 462 (DRGGKTDNPDSPTRSPSVFAKTKENKTKAT). S447 and S449 each carry phosphoserine; by host. Over residues 453 to 462 (KTKENKTKAT) the composition is skewed to basic and acidic residues. An interaction with the nucleocapsid (N-RNA) region spans residues 479-568 (DLLREDEFRE…VEEDIESLTN (90 aa)).

This sequence belongs to the respirovirus P protein family. As to quaternary structure, homotetramer. Interacts (via multimerization domain) with polymerase L; this interaction forms the polymerase complex. Interacts (via N-terminus) with N0; this interaction allows P to chaperon N0 before encapsidation and form the N-P complex. Interacts (via C-terminus) with N-RNA template; this interaction positions the polymerase on the template. In terms of processing, phosphorylated by PKC/PRKCZ, and other unknown kinases. Phosphorylation is necessary for viral transcription and replication. The N-terminus contains the majority of phosphorylated sites. Ser-249 is the major site of phosphorylation, but is not necessary for most functions.

Its subcellular location is the host cytoplasm. Essential cofactor of the RNA polymerase L that plays a central role in the transcription and replication by forming the polymerase complex with RNA polymerase L and recruiting L to the genomic N-RNA template for RNA synthesis. Also plays a central role in the encapsidation of nascent RNA chains by forming the encapsidation complex with the nucleocapsid protein N (N-P complex). Acts as a chaperone for newly synthesized free N protein, so-called N0, allowing encapsidation of nascent RNA chains during replication. The nucleoprotein protein N prevents excessive phosphorylation of P, which leads to down-regulation of viral transcription/ replication. Participates, together with N, in the formation of viral factories (viroplasms), which are large inclusions in the host cytoplasm where replication takes place. Recruits host PI4KB and remodel the host endoplasmic reticulum membrane to form viral replication factories. This Sendai virus (strain Ohita) (SeV) protein is Phosphoprotein (P/V/C).